A 216-amino-acid chain; its full sequence is Redox-sensing transcriptional repressor Rex (216 aa).

The segment at residues 20-59 is a DNA-binding region (H-T-H motif); that stretch reads QYYRLFKSLVEENVTRTNSQLISEKIGVDAATIRRDFSLF. Position 94 to 99 (94 to 99) interacts with NAD(+); sequence GVGNLG.

This sequence belongs to the transcriptional regulatory Rex family. As to quaternary structure, homodimer.

It is found in the cytoplasm. Its function is as follows. Modulates transcription in response to changes in cellular NADH/NAD(+) redox state. The chain is Redox-sensing transcriptional repressor Rex from Lactococcus lactis subsp. cremoris (Streptococcus cremoris).